The chain runs to 769 residues: P-selectin (769 aa).

Residues Met1–Glu32 form the signal peptide. The Extracellular portion of the chain corresponds to Leu33 to Ala717. Asn54 and Asn80 each carry an N-linked (GlcNAc...) asparagine glycan. Positions Ala58–Cys158 constitute a C-type lectin domain. Intrachain disulfides connect Cys60-Cys158, Cys131-Cys150, Cys163-Cys174, Cys168-Cys183, Cys185-Cys194, Cys200-Cys244, Cys230-Cys257, Cys262-Cys306, Cys292-Cys319, Cys324-Cys368, Cys354-Cys381, Cys386-Cys430, Cys416-Cys443, Cys448-Cys492, Cys478-Cys505, Cys510-Cys554, Cys540-Cys567, Cys581-Cys625, Cys611-Cys638, Cys643-Cys687, and Cys673-Cys700. Glu121, Asn123, and Asn124 together coordinate Ca(2+). A carbohydrate is bound at residue Asn123. Residues Glu133 and Asn146 each contribute to the a carbohydrate site. 2 residues coordinate Ca(2+): Asn146 and Asp147. In terms of domain architecture, EGF-like spans Tyr159–Glu195. Asn180 carries N-linked (GlcNAc...) asparagine glycosylation. Sushi domains are found at residues Arg198–Ala259, Val260–Ala321, Ile322–Ala383, Leu384–Ala445, Val446–Ala507, Ser508–Val569, Leu579–Ala640, and Val641–Ala702. Asn212 and Asn219 each carry an N-linked (GlcNAc...) asparagine glycan. Residue Asn347 is glycosylated (N-linked (GlcNAc...) asparagine). Residue Asn398 is glycosylated (N-linked (GlcNAc...) asparagine). Asn604 carries N-linked (GlcNAc...) asparagine glycosylation. Residues Asn655, Asn662, and Asn680 are each glycosylated (N-linked (GlcNAc...) asparagine). The chain crosses the membrane as a helical span at residues Ala718–Leu734. The Cytoplasmic portion of the chain corresponds to Arg735–Pro769. Residues Gln740–Pro769 form a disordered region. The Endocytosis signal motif lies at Tyr757 to Phe760. Residues Phe760 to Pro769 form an interaction with SNX17 region.

The protein belongs to the selectin/LECAM family. As to quaternary structure, interacts with SNX17. Interacts with SELPLG/PSGL1 and PODXL2 and mediates neutrophil adhesion and leukocyte rolling. This interaction requires the sialyl-Lewis X epitope of SELPLG and PODXL2, and specific tyrosine sulfation on SELPLG. Interacts (via C-type lectin domain) with alpha-IIb/beta3 integrin ITGA2B:ITGB3 and alpha-V/beta-3 integrin ITGAV:ITGB3. Interacts with alpha5/beta1 integrin ITGA5:ITGB1 and alpha4/beta1 integrin ITGA4:ITGB.

It is found in the cell membrane. Its function is as follows. Ca(2+)-dependent receptor for myeloid cells that binds to carbohydrates on neutrophils and monocytes. Mediates the interaction of activated endothelial cells or platelets with leukocytes. The ligand recognized is sialyl-Lewis X. Mediates rapid rolling of leukocyte rolling over vascular surfaces during the initial steps in inflammation through interaction with SELPLG. Mediates cell-cell interactions and cell adhesion via the interaction with integrin alpha-IIb/beta3 (ITGA2B:ITGB3) and integrin alpha-V/beta-3 (ITGAV:ITGB3). This Ovis aries (Sheep) protein is P-selectin (SELP).